Reading from the N-terminus, the 767-residue chain is Protein transport protein Sec23B (767 aa).

Ala2 is modified (N-acetylalanine). The Zn(2+) site is built by Cys61, Cys66, Cys85, and Cys88. An N6-acetyllysine modification is found at Lys564. One copy of the Gelsolin-like repeat lies at 634–720 (PEPVLLDSSS…EHGGSQARFL (87 aa)).

This sequence belongs to the SEC23/SEC24 family. SEC23 subfamily. As to quaternary structure, COPII is composed of at least five proteins: the Sec23/24 complex, the Sec13/31 complex and Sar1. Interacts with SAR1A. As to expression, ubiquitously expressed.

The protein localises to the cytoplasmic vesicle. It localises to the COPII-coated vesicle membrane. The protein resides in the endoplasmic reticulum membrane. Its subcellular location is the cytoplasm. It is found in the cytosol. Functionally, component of the coat protein complex II (COPII) which promotes the formation of transport vesicles from the endoplasmic reticulum (ER). The coat has two main functions, the physical deformation of the endoplasmic reticulum membrane into vesicles and the selection of cargo molecules for their transport to the Golgi complex. This chain is Protein transport protein Sec23B, found in Homo sapiens (Human).